The following is a 322-amino-acid chain: 4-hydroxy-3-methylbut-2-enyl diphosphate reductase (322 aa).

Cys-15 contacts [4Fe-4S] cluster. His-44 and His-77 together coordinate (2E)-4-hydroxy-3-methylbut-2-enyl diphosphate. Positions 44 and 77 each coordinate dimethylallyl diphosphate. Residues His-44 and His-77 each contribute to the isopentenyl diphosphate site. Residue Cys-99 coordinates [4Fe-4S] cluster. Residue His-127 coordinates (2E)-4-hydroxy-3-methylbut-2-enyl diphosphate. His-127 is a binding site for dimethylallyl diphosphate. Residue His-127 participates in isopentenyl diphosphate binding. The active-site Proton donor is Glu-129. Thr-168 serves as a coordination point for (2E)-4-hydroxy-3-methylbut-2-enyl diphosphate. A [4Fe-4S] cluster-binding site is contributed by Cys-198. 4 residues coordinate (2E)-4-hydroxy-3-methylbut-2-enyl diphosphate: Ser-226, Ser-227, Asn-228, and Ser-270. Dimethylallyl diphosphate-binding residues include Ser-226, Ser-227, Asn-228, and Ser-270. The isopentenyl diphosphate site is built by Ser-226, Ser-227, Asn-228, and Ser-270.

It belongs to the IspH family. [4Fe-4S] cluster serves as cofactor.

The catalysed reaction is isopentenyl diphosphate + 2 oxidized [2Fe-2S]-[ferredoxin] + H2O = (2E)-4-hydroxy-3-methylbut-2-enyl diphosphate + 2 reduced [2Fe-2S]-[ferredoxin] + 2 H(+). The enzyme catalyses dimethylallyl diphosphate + 2 oxidized [2Fe-2S]-[ferredoxin] + H2O = (2E)-4-hydroxy-3-methylbut-2-enyl diphosphate + 2 reduced [2Fe-2S]-[ferredoxin] + 2 H(+). It participates in isoprenoid biosynthesis; dimethylallyl diphosphate biosynthesis; dimethylallyl diphosphate from (2E)-4-hydroxy-3-methylbutenyl diphosphate: step 1/1. It functions in the pathway isoprenoid biosynthesis; isopentenyl diphosphate biosynthesis via DXP pathway; isopentenyl diphosphate from 1-deoxy-D-xylulose 5-phosphate: step 6/6. Catalyzes the conversion of 1-hydroxy-2-methyl-2-(E)-butenyl 4-diphosphate (HMBPP) into a mixture of isopentenyl diphosphate (IPP) and dimethylallyl diphosphate (DMAPP). Acts in the terminal step of the DOXP/MEP pathway for isoprenoid precursor biosynthesis. The protein is 4-hydroxy-3-methylbut-2-enyl diphosphate reductase of Neisseria gonorrhoeae (strain ATCC 700825 / FA 1090).